Reading from the N-terminus, the 674-residue chain is ATP-citrate synthase subunit 1 (674 aa).

Residues 1 to 10 (MPSATSTNGA) are compositionally biased toward low complexity. The interval 1-26 (MPSATSTNGANGNGNGNGASASPAPG) is disordered. ATP is bound by residues 261–281 (LLRYQADPACKILVLLGEVGG) and 312–338 (FKTEVQFGHAGAFANSQLETAATKNKS). Glu278 contributes to the Mg(2+) binding site. His320 functions as the Tele-phosphohistidine intermediate in the catalytic mechanism. 339–349 (MREAGFYVPDT) is a binding site for CoA.

Belongs to the succinate/malate CoA ligase alpha subunit family. Composed of two subunits.

The protein resides in the cytoplasm. It carries out the reaction oxaloacetate + acetyl-CoA + ADP + phosphate = citrate + ATP + CoA. Catalyzes the formation of cytosolic acetyl-CoA, which is mainly used for the biosynthesis of fatty acids and sterols. The sequence is that of ATP-citrate synthase subunit 1 (ACL1) from Sordaria macrospora (strain ATCC MYA-333 / DSM 997 / K(L3346) / K-hell).